A 915-amino-acid chain; its full sequence is Coiled-coil domain-containing protein 57 (915 aa).

A centrosomal targeting domain region spans residues 1-502; that stretch reads MLPLGSEPAL…MHGLPRPGAQ (502 aa). Coiled-coil stretches lie at residues 92–173, 214–422, 456–483, and 521–548; these read VSEL…QRQE, LEAL…LERD, KSQV…VTLE, and IQRL…LSHQ. Disordered regions lie at residues 555 to 574, 606 to 653, and 724 to 915; these read TAAE…GDAA, PLKM…QAGP, and QHGG…NIMD. Residues 606–915 are microtubule binding domain; it reads PLKMSSPHAE…PKIRNYNIMD (310 aa). A compositionally biased stretch (polar residues) spans 613–627; it reads HAESQPSVRTSTETT. Over residues 628-652 the composition is skewed to low complexity; sequence GGSAQAGQAGGSVQAGQAGGSVQAG. The span at 745-758 shows a compositional bias: basic and acidic residues; sequence GREDAKSAEDEAPS. Polar residues-rich tracts occupy residues 781–794, 819–830, and 841–852; these read PKTQ…TCKS, SHSSSSFASGTL, and SSPSGVTSQGDS. The span at 879–891 shows a compositional bias: low complexity; sequence KTAAQAKAKTTGA.

In terms of assembly, interacts with CEP63; the interaction is required for their location to proximal end of centrioles. Interacts with microtubules.

It is found in the cytoplasm. It localises to the cytoskeleton. Its subcellular location is the microtubule organizing center. The protein resides in the centrosome. The protein localises to the centriolar satellite. It is found in the centriole. It localises to the spindle. Functionally, pleiotropic regulator of centriole duplication, mitosis, and ciliogenesis. Critical interface between centrosome and microtubule-mediated cellular processes. Centriole duplication protein required for recruitment of CEP63, CEP152, and PLK4 to the centrosome. Independent of its centrosomal targeting, localizes to and interacts with microtubules and regulates microtubule nucleation, stability, and mitotic progression. In Homo sapiens (Human), this protein is Coiled-coil domain-containing protein 57.